Consider the following 1412-residue polypeptide: Erbin (1412 aa).

17 LRR repeats span residues 23–44, 47–68, 70–91, 93–114, 116–137, 139–161, 162–183, 185–206, 208–229, 231–252, 254–275, 277–298, 300–321, 323–344, 346–367, 369–391, and 392–413; these read TVTT…IFTF, TLEE…LFNC, SLHK…IANL, NLRE…IKNC, VLTI…FSQL, NLTQ…GRLT, KLQI…MNRL, QLER…LEQL, GLKE…IGSL, QLTY…ISTC, NLQD…IGSL, NITT…IGGL, SVEE…IGQL, NLRT…IGSW, NITV…MGDM, KLKV…TKLQ, and QLTA…QKET. Phosphoserine is present on residues Ser-440 and Ser-444. Disordered regions lie at residues 464–489 and 506–542; these read CDED…PYPD and KDEE…TTTV. Positions 470–480 are enriched in basic and acidic residues; the sequence is EREAPPREGNL. Position 483 is a phosphotyrosine (Tyr-483). A Phosphothreonine modification is found at Thr-485. Residues 506 to 532 are compositionally biased toward basic and acidic residues; the sequence is KDEETNEDSGRDLKPHEDQQDINKDVG. Low complexity predominate over residues 533–542; it reads VKTSESTTTV. Phosphoserine is present on residues Ser-569, Ser-598, Ser-602, Ser-603, and Ser-620. The segment at 615–681 is disordered; that stretch reads PLIETSINQP…TDSSQDTSLC (67 aa). Positions 632–641 are enriched in basic and acidic residues; it reads NKKDDTKETD. The segment covering 650 to 662 has biased composition (low complexity); that stretch reads NSNQNNSNCSSPS. A compositionally biased stretch (polar residues) spans 663 to 681; the sequence is RMSDSVSLNTDSSQDTSLC. Residue Ser-715 is modified to Phosphoserine. The disordered stretch occupies residues 803–867; it reads ETEHLENGNK…PQKSGPVGSV (65 aa). The span at 817-835 shows a compositional bias: polar residues; sequence ESVNKVNGHSEETSQSPNR. Phosphoserine is present on residues Ser-852, Ser-857, and Ser-872. Thr-917 bears the Phosphothreonine mark. Phosphotyrosine is present on Tyr-920. A Phosphoserine modification is found at Ser-931. Tyr-972 carries the phosphotyrosine modification. Disordered stretches follow at residues 997 to 1021 and 1075 to 1192; these read NPQI…NQSY and QRQS…KSKV. The span at 1075 to 1086 shows a compositional bias: polar residues; sequence QRQSSVSSTASV. Tyr-1104 is modified (phosphotyrosine). Positions 1157–1171 are enriched in polar residues; sequence MSVSDFNYSRTSPSK. Residues Ser-1158, Ser-1179, and Ser-1286 each carry the phosphoserine modification. The 90-residue stretch at 1321-1410 folds into the PDZ domain; the sequence is EIRVRVEKDP…TVELIIVREV (90 aa).

This sequence belongs to the LAP (LRR and PDZ) protein family. In terms of assembly, interacts with ERBB2, BPAG1 and ITGB4. May favor the localization of ERBB2, by restricting its presence to the basolateral membrane of epithelial cells. Also found to interact with ARVCF and delta catenin. Interacts (via C-terminus) with DST Isoform 3 (via N-terminus). Interacts with NOD2 (via CARD domain). Highly expressed in brain, heart, kidney, muscle and stomach, followed by liver, spleen and intestine.

The protein resides in the cell junction. The protein localises to the hemidesmosome. Its subcellular location is the nucleus membrane. It localises to the basolateral cell membrane. Its function is as follows. Acts as an adapter for the receptor ERBB2, in epithelia. By binding the unphosphorylated 'Tyr-1248' of receptor ERBB2, it may contribute to stabilize this unphosphorylated state. Inhibits NOD2-dependent NF-kappa-B signaling and pro-inflammatory cytokine secretion. The polypeptide is Erbin (Homo sapiens (Human)).